Here is a 910-residue protein sequence, read N- to C-terminus: Potassium/sodium hyperpolarization-activated cyclic nucleotide-gated channel 1 (910 aa).

Positions 1-75 are disordered; it reads MEGGGKPNSA…PAGSFEDAEG (75 aa). Residues 1–131 lie on the Cytoplasmic side of the membrane; the sequence is MEGGGKPNSA…WIIHPYSDFR (131 aa). Residues 132–153 form a helical membrane-spanning segment; sequence FYWDLIMLIMMVGNLVIIPVGI. The Extracellular portion of the chain corresponds to 154 to 162; sequence TFFTEQTTT. Residues 163 to 183 form a helical membrane-spanning segment; it reads PWIIFNVASDTVFLLDLIMNF. Residues 184-204 are Cytoplasmic-facing; the sequence is RTGTVNEDSSEIILDPKVIKM. The helical transmembrane segment at 205–225 threads the bilayer; that stretch reads NYLKSWFVVDFISSIPVDYIF. Over 226–249 the chain is Extracellular; the sequence is LIVEKGMDSEVYKTARALRIVRFT. A helical; Voltage-sensor transmembrane segment spans residues 250–270; sequence KILSLLRLLRLSRLIRYIHQW. Over 271-284 the chain is Cytoplasmic; sequence EEIFHMTYDLASAV. Residues 285-307 form a helical membrane-spanning segment; that stretch reads VRIFNLIGMMLLLCHWDGCLQFL. Residues 308–333 lie on the Extracellular side of the membrane; sequence VPLLQDFPPDCWVSLNEMVNDSWGKQ. The N-linked (GlcNAc...) asparagine glycan is linked to Asn327. Positions 334–355 form an intramembrane region, pore-forming; that stretch reads YSYALFKAMSHMLCIGYGAQAP. A Selectivity filter motif is present at residues 347 to 351; sequence CIGYG. Topologically, residues 356 to 360 are extracellular; that stretch reads VSMSD. Residues 361–381 traverse the membrane as a helical segment; it reads LWITMLSMIVGATCYAMFVGH. Residues 382–910 lie on the Cytoplasmic side of the membrane; the sequence is ATALIQSLDS…AEKPRFASNL (529 aa). Positions 528, 529, 531, 538, 539, 579, and 582 each coordinate 3',5'-cyclic AMP. Disordered regions lie at residues 634-681, 771-791, and 865-910; these read TALN…QPSA, QQQQ…VHKS, and QMSS…ASNL. Over residues 639 to 680 the composition is skewed to low complexity; the sequence is TSSTTTPTSRMRTQSPPVYTATSLSHSNLHSPSPSTQTPQPS. The segment covering 780–791 has biased composition (polar residues); the sequence is GSSTPKNEVHKS. A compositionally biased stretch (pro residues) spans 875 to 885; sequence RGVPPAPPPPA. A compositionally biased stretch (basic and acidic residues) spans 900–910; sequence DAEKPRFASNL.

Belongs to the potassium channel HCN family. Homotetramer. Heterotetramer with HCN2. The potassium channel is composed of a homo- or heterotetrameric complex of pore-forming subunits. Interacts with KCNE2. Interacts with the SH3 domain of CSK. N-glycosylated. In terms of tissue distribution, predominantly expressed in brain. Highly expressed in apical dendrites of pyramidal neurons in the cortex, in the layer corresponding to the stratum lacunosum-moleculare in the hippocampus and in axons of basket cells in the cerebellum (at protein level). Expressed in a subset of elongated cells in taste buds.

Its subcellular location is the cell membrane. The catalysed reaction is Na(+)(in) = Na(+)(out). It carries out the reaction K(+)(in) = K(+)(out). With respect to regulation, activated by cAMP. cAMP binding causes a conformation change that leads to the assembly of an active tetramer and channel opening. Compared to other family members, cAMP has less stimulatory effect on HCN1 because part of the molecules already contain bound cAMP and form homotetramers when cAMP levels are low, this inherent tetramerization in HCN1 results in a weaker response to increased cAMP. Hyperpolarization-activated ion channel that are permeable to sodium and potassium ions. Exhibits weak selectivity for potassium over sodium ions. Contributes to the native pacemaker currents in heart (If) and in neurons (Ih). Participates in cerebellar mechanisms of motor learning. May mediate responses to sour stimuli. The protein is Potassium/sodium hyperpolarization-activated cyclic nucleotide-gated channel 1 (Hcn1) of Mus musculus (Mouse).